Here is a 594-residue protein sequence, read N- to C-terminus: DNA ligase (594 aa).

Glutamate 280 provides a ligand contact to ATP. Lysine 282 (N6-AMP-lysine intermediate) is an active-site residue. ATP-binding residues include arginine 287, arginine 316, glutamate 345, phenylalanine 385, arginine 456, and lysine 462.

This sequence belongs to the ATP-dependent DNA ligase family. Mg(2+) is required as a cofactor.

The enzyme catalyses ATP + (deoxyribonucleotide)n-3'-hydroxyl + 5'-phospho-(deoxyribonucleotide)m = (deoxyribonucleotide)n+m + AMP + diphosphate.. Its function is as follows. DNA ligase that seals nicks in double-stranded DNA during DNA replication, DNA recombination and DNA repair. This Halorubrum lacusprofundi (strain ATCC 49239 / DSM 5036 / JCM 8891 / ACAM 34) protein is DNA ligase.